A 436-amino-acid chain; its full sequence is Histidinol dehydrogenase (436 aa).

Substrate is bound by residues S242, Q264, and H267. 2 residues coordinate Zn(2+): Q264 and H267. Residues E332 and H333 each act as proton acceptor in the active site. Residues H333, D366, E420, and H425 each coordinate substrate. D366 provides a ligand contact to Zn(2+). H425 is a binding site for Zn(2+).

It belongs to the histidinol dehydrogenase family. Requires Zn(2+) as cofactor.

The catalysed reaction is L-histidinol + 2 NAD(+) + H2O = L-histidine + 2 NADH + 3 H(+). Its pathway is amino-acid biosynthesis; L-histidine biosynthesis; L-histidine from 5-phospho-alpha-D-ribose 1-diphosphate: step 9/9. Catalyzes the sequential NAD-dependent oxidations of L-histidinol to L-histidinaldehyde and then to L-histidine. This Nitratidesulfovibrio vulgaris (strain ATCC 29579 / DSM 644 / CCUG 34227 / NCIMB 8303 / VKM B-1760 / Hildenborough) (Desulfovibrio vulgaris) protein is Histidinol dehydrogenase.